Here is a 411-residue protein sequence, read N- to C-terminus: DNA polymerase IV (411 aa).

In terms of domain architecture, UmuC spans 18–211 (VVHVDMDCFY…LDVADLHGVG (194 aa)). Positions 22 and 130 each coordinate Mg(2+). Residue glutamate 131 is part of the active site. Disordered regions lie at residues 248–280 (FHRR…GATE) and 376–411 (GFSG…DEFT). Residues 253-274 (RGADSRPVEPRGKPKSLSRESS) are compositionally biased toward basic and acidic residues. Residues 384-402 (DGGGHEGGACGGAGRGSCG) are compositionally biased toward gly residues.

It belongs to the DNA polymerase type-Y family. In terms of assembly, monomer. The cofactor is Mg(2+).

It is found in the cytoplasm. It carries out the reaction DNA(n) + a 2'-deoxyribonucleoside 5'-triphosphate = DNA(n+1) + diphosphate. Its function is as follows. Poorly processive, error-prone DNA polymerase involved in untargeted mutagenesis. Copies undamaged DNA at stalled replication forks, which arise in vivo from mismatched or misaligned primer ends. These misaligned primers can be extended by PolIV. Exhibits no 3'-5' exonuclease (proofreading) activity. May be involved in translesional synthesis. In Halobacterium salinarum (strain ATCC 29341 / DSM 671 / R1), this protein is DNA polymerase IV.